Reading from the N-terminus, the 439-residue chain is Tol-Pal system protein TolB (439 aa).

The first 22 residues, 1–22 (MKKPLRWLAALTALLLPLSAFA), serve as a signal peptide directing secretion.

It belongs to the TolB family. In terms of assembly, the Tol-Pal system is composed of five core proteins: the inner membrane proteins TolA, TolQ and TolR, the periplasmic protein TolB and the outer membrane protein Pal. They form a network linking the inner and outer membranes and the peptidoglycan layer.

Its subcellular location is the periplasm. In terms of biological role, part of the Tol-Pal system, which plays a role in outer membrane invagination during cell division and is important for maintaining outer membrane integrity. In Xanthomonas campestris pv. campestris (strain 8004), this protein is Tol-Pal system protein TolB.